Reading from the N-terminus, the 205-residue chain is Large ribosomal subunit protein uL4 (205 aa).

The interval 43–97 is disordered; that stretch reads GKRQGTSKVKNRSAVRGGGKKPWRQKGTGRARQGSIRAPQWRGGGTVFGPTPRSY. Residues 51-71 are compositionally biased toward basic residues; the sequence is VKNRSAVRGGGKKPWRQKGTG.

This sequence belongs to the universal ribosomal protein uL4 family. In terms of assembly, part of the 50S ribosomal subunit.

Functionally, one of the primary rRNA binding proteins, this protein initially binds near the 5'-end of the 23S rRNA. It is important during the early stages of 50S assembly. It makes multiple contacts with different domains of the 23S rRNA in the assembled 50S subunit and ribosome. In terms of biological role, forms part of the polypeptide exit tunnel. The protein is Large ribosomal subunit protein uL4 of Lactobacillus acidophilus (strain ATCC 700396 / NCK56 / N2 / NCFM).